The chain runs to 312 residues: Methionyl-tRNA formyltransferase (312 aa).

113–116 (SILP) lines the (6S)-5,6,7,8-tetrahydrofolate pocket.

It belongs to the Fmt family.

The catalysed reaction is L-methionyl-tRNA(fMet) + (6R)-10-formyltetrahydrofolate = N-formyl-L-methionyl-tRNA(fMet) + (6S)-5,6,7,8-tetrahydrofolate + H(+). Attaches a formyl group to the free amino group of methionyl-tRNA(fMet). The formyl group appears to play a dual role in the initiator identity of N-formylmethionyl-tRNA by promoting its recognition by IF2 and preventing the misappropriation of this tRNA by the elongation apparatus. The polypeptide is Methionyl-tRNA formyltransferase (Hydrogenovibrio crunogenus (strain DSM 25203 / XCL-2) (Thiomicrospira crunogena)).